Consider the following 437-residue polypeptide: 26S proteasome subunit RPT4 (437 aa).

The tract at residues 1-51 is disordered; sequence MSEEQDPLLAGLGETSGDNHTQQSHEQQPEQPQETEEHHEEEPSRVDPEQE. Ser-2 is modified (N-acetylserine). Positions 20–32 are enriched in low complexity; the sequence is HTQQSHEQQPEQP. Positions 35 to 51 are enriched in basic and acidic residues; the sequence is TEEHHEEEPSRVDPEQE. 222-229 contacts ATP; sequence GPPGTGKT.

The protein belongs to the AAA ATPase family. In terms of processing, N-acetylated by NAT1.

In terms of biological role, the 26S proteasome is involved in the ATP-dependent degradation of ubiquitinated proteins. The regulatory (or ATPase) complex confers ATP dependency and substrate specificity to the 26S complex. The sequence is that of 26S proteasome subunit RPT4 (RPT4) from Saccharomyces cerevisiae (strain ATCC 204508 / S288c) (Baker's yeast).